The primary structure comprises 59 residues: Cecropin-A1 (59 aa).

Positions 1 to 23 (MNFTKLFAIVLLAALVLLGQTEA) are cleaved as a signal peptide.

This sequence belongs to the cecropin family.

Its subcellular location is the secreted. Its function is as follows. Cecropins have lytic and antibacterial activity against several Gram-positive and Gram-negative bacteria. This is Cecropin-A1 (CECA1) from Aedes albopictus (Asian tiger mosquito).